The following is a 63-amino-acid chain: Large ribosomal subunit protein bL35 (63 aa).

Basic residues-rich tracts occupy residues 1 to 25 (MPKM…KHRQ) and 32 to 47 (LTKK…RPKK). The segment at 1–55 (MPKMKSKSSAAKRFKKTANGFKHRQSFTSHILTKKSTKRKRHLRPKKQVNPSDVP) is disordered.

This sequence belongs to the bacterial ribosomal protein bL35 family.

This Hahella chejuensis (strain KCTC 2396) protein is Large ribosomal subunit protein bL35.